The following is a 555-amino-acid chain: Urocanate hydratase (555 aa).

NAD(+) is bound by residues 52–53 (GG), Q130, 176–178 (GMG), E196, R201, 242–243 (NA), 263–267 (QTSAH), 273–274 (YL), and Y322. C410 is an active-site residue. G492 is an NAD(+) binding site.

This sequence belongs to the urocanase family. NAD(+) serves as cofactor.

The protein resides in the cytoplasm. The enzyme catalyses 4-imidazolone-5-propanoate = trans-urocanate + H2O. It functions in the pathway amino-acid degradation; L-histidine degradation into L-glutamate; N-formimidoyl-L-glutamate from L-histidine: step 2/3. Its function is as follows. Catalyzes the conversion of urocanate to 4-imidazolone-5-propionate. This Shewanella baltica (strain OS195) protein is Urocanate hydratase.